A 164-amino-acid chain; its full sequence is Cyclic pyranopterin monophosphate synthase (164 aa).

Substrate contacts are provided by residues leucine 77–histidine 79 and methionine 115–glutamate 116. The active site involves aspartate 130.

This sequence belongs to the MoaC family. As to quaternary structure, homohexamer; trimer of dimers.

The catalysed reaction is (8S)-3',8-cyclo-7,8-dihydroguanosine 5'-triphosphate = cyclic pyranopterin phosphate + diphosphate. The protein operates within cofactor biosynthesis; molybdopterin biosynthesis. In terms of biological role, catalyzes the conversion of (8S)-3',8-cyclo-7,8-dihydroguanosine 5'-triphosphate to cyclic pyranopterin monophosphate (cPMP). In Rhizobium meliloti (strain 1021) (Ensifer meliloti), this protein is Cyclic pyranopterin monophosphate synthase.